Here is a 193-residue protein sequence, read N- to C-terminus: Adenine phosphoribosyltransferase (193 aa).

This sequence belongs to the purine/pyrimidine phosphoribosyltransferase family. Homodimer.

Its subcellular location is the cytoplasm. The enzyme catalyses AMP + diphosphate = 5-phospho-alpha-D-ribose 1-diphosphate + adenine. Its pathway is purine metabolism; AMP biosynthesis via salvage pathway; AMP from adenine: step 1/1. Functionally, catalyzes a salvage reaction resulting in the formation of AMP, that is energically less costly than de novo synthesis. The chain is Adenine phosphoribosyltransferase from Bifidobacterium adolescentis (strain ATCC 15703 / DSM 20083 / NCTC 11814 / E194a).